The sequence spans 402 residues: Potassium channel subfamily K member 9 (402 aa).

Residues 1 to 8 are Cytoplasmic-facing; the sequence is MKRQNVRT. The helical transmembrane segment at 9-29 threads the bilayer; that stretch reads LSLIACTFTYLLVGAAVFDAL. Residues 30–88 are Extracellular-facing; sequence ESDHEMREEEKLKAEEVRLRGKYNISSDDYQQLELVILQSEPHRAGVQWKFAGSFYFAI. Asparagine 53 carries N-linked (GlcNAc...) asparagine glycosylation. The pore-forming intramembrane region spans 89–101; sequence TVITTIGYGHAAP. K(+)-binding residues include threonine 93, isoleucine 94, glycine 95, and tyrosine 96. Positions 93-98 are selectivity filter 1; sequence TIGYGH. The Extracellular segment spans residues 102–107; it reads GTDAGK. A helical membrane pass occupies residues 108–128; that stretch reads AFCMFYAVLGIPLTLVMFQSL. Topologically, residues 129–158 are cytoplasmic; that stretch reads GERMNTFVRYLLKRIKKCCGMRNTEVSMEN. A helical membrane pass occupies residues 159-179; the sequence is MVTVGFFSCMGTLCLGAAAFS. Residues 180 to 194 lie on the Extracellular side of the membrane; the sequence is QCEDWSFFHAYYYCF. An intramembrane region (pore-forming) is located at residues 195–207; that stretch reads ITLTTIGFGDFVA. The K(+) site is built by threonine 199, isoleucine 200, glycine 201, and phenylalanine 202. Residues 199-204 are selectivity filter 2; that stretch reads TIGFGD. The Extracellular portion of the chain corresponds to 208 to 218; the sequence is LQAKGALQRKP. Residues 219–239 traverse the membrane as a helical segment; sequence FYVAFSFMYILVGLTVIGAFL. Residues 240 to 402 lie on the Cytoplasmic side of the membrane; it reads NLVVLRFLTM…HRLHLRRKSI (163 aa). The X-gate stretch occupies residues 243-248; sequence VLRFLT.

Belongs to the two pore domain potassium channel (TC 1.A.1.8) family. Homodimer. Heterodimer with KCNK1. Heterodimer with KCNK3. As to expression, expressed in adrenal glands mainly in outer zona glomerulosa and inner zona medullaris. Expressed in retinal ganglion cells. Expressed in dentate gyrus (at protein level).

It localises to the cell membrane. The protein localises to the mitochondrion inner membrane. The protein resides in the cell projection. Its subcellular location is the dendrite. It carries out the reaction K(+)(in) = K(+)(out). It catalyses the reaction Na(+)(in) = Na(+)(out). With respect to regulation, inhibited by NTS:NTSR1 signaling in dentate gyrus granule cells. K(+) channel that conducts voltage-dependent outward rectifying currents upon membrane depolarization. Voltage sensing is coupled to K(+) electrochemical gradient in an 'ion flux gating' mode where outward but not inward ion flow opens the gate. Changes ion selectivity and becomes permeable to Na(+) ions in response to extracellular acidification. Protonation of the pH sensor His-98 stabilizes C-type inactivation conformation likely converting the channel from outward K(+)-conducting, to inward Na(+)-conducting to nonconductive state. Homo- and heterodimerizes to form functional channels with distinct regulatory and gating properties. Allows K(+) currents with fast-gating kinetics important for the repolarization and hyperpolarization phases of action potentials. In granule neurons, hyperpolarizes the resting membrane potential to limit intrinsic neuronal excitability, but once the action potential threshold is reached, supports high-frequency action potential firing and increased neuronal excitability. Homomeric and/or heteromeric KCNK3:KCNK9 channels operate in cerebellar granule cells, whereas heteromeric KCNK1:KCNK9 enables currents in hippocampal dentate gyrus granule neurons. Dispensable for central chemosensory respiration i.e. breathing controlled by brainstem CO2/pH, it rather conducts pH-sensitive currents and controls the firing rate of serotonergic raphe neurons involved in potentiation of the respiratory chemoreflex. In retinal ganglion cells, mediates outward rectifying currents that regulate action potentials in response to acidification of the synaptic cleft. Involved in transmission of image-forming and nonimage-forming visual information in the retina. In adrenal gland, contributes to the maintenance of a hyperpolarized resting membrane potential of aldosterone-producing cells at zona glomerulosa and limits aldosterone release as part of a regulatory mechanism that controls arterial blood pressure and electrolyte homeostasis. This Mus musculus (Mouse) protein is Potassium channel subfamily K member 9.